The following is a 258-amino-acid chain: Small ribosomal subunit protein uS2 (258 aa).

The segment at 226 to 258 (KQGQDDEETLEVDFKENADGSEEIVSAEENPED) is disordered. Acidic residues predominate over residues 244-258 (DGSEEIVSAEENPED).

The protein belongs to the universal ribosomal protein uS2 family.

This is Small ribosomal subunit protein uS2 from Lactobacillus acidophilus (strain ATCC 700396 / NCK56 / N2 / NCFM).